Consider the following 186-residue polypeptide: ATP synthase subunit delta (186 aa).

It belongs to the ATPase delta chain family. As to quaternary structure, F-type ATPases have 2 components, F(1) - the catalytic core - and F(0) - the membrane proton channel. F(1) has five subunits: alpha(3), beta(3), gamma(1), delta(1), epsilon(1). CF(0) has four main subunits: a(1), b(1), b'(1) and c(10-14). The alpha and beta chains form an alternating ring which encloses part of the gamma chain. F(1) is attached to F(0) by a central stalk formed by the gamma and epsilon chains, while a peripheral stalk is formed by the delta, b and b' chains.

The protein localises to the cell inner membrane. F(1)F(0) ATP synthase produces ATP from ADP in the presence of a proton or sodium gradient. F-type ATPases consist of two structural domains, F(1) containing the extramembraneous catalytic core and F(0) containing the membrane proton channel, linked together by a central stalk and a peripheral stalk. During catalysis, ATP synthesis in the catalytic domain of F(1) is coupled via a rotary mechanism of the central stalk subunits to proton translocation. Functionally, this protein is part of the stalk that links CF(0) to CF(1). It either transmits conformational changes from CF(0) to CF(1) or is implicated in proton conduction. The chain is ATP synthase subunit delta from Bradyrhizobium sp. (strain ORS 278).